Here is an 81-residue protein sequence, read N- to C-terminus: ATP synthase subunit c, chloroplastic (81 aa).

2 helical membrane passes run P3–G23 and L57–A77.

This sequence belongs to the ATPase C chain family. In terms of assembly, F-type ATPases have 2 components, F(1) - the catalytic core - and F(0) - the membrane proton channel. F(1) has five subunits: alpha(3), beta(3), gamma(1), delta(1), epsilon(1). F(0) has four main subunits: a(1), b(1), b'(1) and c(10-14). The alpha and beta chains form an alternating ring which encloses part of the gamma chain. F(1) is attached to F(0) by a central stalk formed by the gamma and epsilon chains, while a peripheral stalk is formed by the delta, b and b' chains.

Its subcellular location is the plastid. It localises to the chloroplast thylakoid membrane. Its function is as follows. F(1)F(0) ATP synthase produces ATP from ADP in the presence of a proton or sodium gradient. F-type ATPases consist of two structural domains, F(1) containing the extramembraneous catalytic core and F(0) containing the membrane proton channel, linked together by a central stalk and a peripheral stalk. During catalysis, ATP synthesis in the catalytic domain of F(1) is coupled via a rotary mechanism of the central stalk subunits to proton translocation. Key component of the F(0) channel; it plays a direct role in translocation across the membrane. A homomeric c-ring of between 10-14 subunits forms the central stalk rotor element with the F(1) delta and epsilon subunits. This is ATP synthase subunit c, chloroplastic from Welwitschia mirabilis (Tree tumbo).